The sequence spans 122 residues: Large ribosomal subunit protein uL14 (122 aa).

The protein belongs to the universal ribosomal protein uL14 family. Part of the 50S ribosomal subunit. Forms a cluster with proteins L3 and L19. In the 70S ribosome, L14 and L19 interact and together make contacts with the 16S rRNA in bridges B5 and B8.

Functionally, binds to 23S rRNA. Forms part of two intersubunit bridges in the 70S ribosome. The protein is Large ribosomal subunit protein uL14 of Nitrobacter winogradskyi (strain ATCC 25391 / DSM 10237 / CIP 104748 / NCIMB 11846 / Nb-255).